The sequence spans 1026 residues: MNMTEKIQTYLNDPKIVSVNTVDAHSDHKYFESLEEFSEGEMKLRQSLNGKWKIHYAQNTNQVLKDFYKTEFDETDLNFINVPGHLELQGFGSPQYVNTQYPWDGKEFLRPPQVPQESNAVASYVKHFTLNDALKDKKVFISFQGVATSIFVWVNGNFVGYSEDSFTPSEFEISDYLVEGDNKLAVAVYRYSTASWLEDQDFWRLYGIFRDVYLYAIPKVHVQDLFVKGDYDYQTKAGQLDIDLKTVGDYEDKKIKYVLSDYEGIVTEGDASVNGDGELSVSLENLKIKPWSAESPKLYDLILHVLDDDQVVEVVPVKVGFRRFEIKDKLMLLNGKRIVFKGVNRHEFNARTGRCITEEDMLWDIKVMKQHNINAVRTSHYPNQTRWYELCDEYGLYVIDEANLETHGTWQKLGLCEPSWNIPASEPEWLPACLDRANNMFQRDKNHASVIIWSCGNESYAGKDIADMADYFRSVDNTRPVHYEGVAWCREFDYITDIESRMYAKPADIEEYLTTGKLVDLSSVSDKHFASGNLTNKPQKPYISCEYMHTMGNSGGGLQLYTDLEKYPEYQGGFIWDFIDQAIYKTLPNGSEFLSYGGDWHDRPSDYEFCGNGIVFADRTLTPKLQTVKHLYSNIKIAVDEKSVTIKNDNLFEDLSAYTFLARVYEDGRKVSESEYHFDVKPGEEATFPVNFVVEASNSEQIYEVACVLREATEWAPKGHEIVRGQYVVEKISTETPVKAPLNVVEGDFNIGIQGQNFSILLSRAQNTLVSAKYNGVEFIEKGPKLSFTRAYTDNDRGAGYPFEMAGWKVAGNYSKVTDTQIQIEDDSVKVTYVHELPGLSDVEVKVTYQVDYKGRIFVTANYDGKAGLPNFPEFGLEFAIGSQFTNLSYYGYGAEESYRDKLPGAYLGRYETSVEKTFAPYLMPQESGNHYGTREFTVSDDNHNGLKFTALNKAFEFSALRNSTEQIENARHQYELQESDATWIKVLAAQMGVGGDDTWGAPVHDEFLLSSADSYQLSFMIEPLN.

Glutamate 458 (proton donor) is an active-site residue. Glutamate 546 acts as the Nucleophile in catalysis.

It belongs to the glycosyl hydrolase 2 family.

It catalyses the reaction Hydrolysis of terminal non-reducing beta-D-galactose residues in beta-D-galactosides.. The chain is Beta-galactosidase (lacZ) from Streptococcus thermophilus.